Reading from the N-terminus, the 152-residue chain is uncharacterized protein (152 aa).

This sequence belongs to the antirestriction protein family.

This is an uncharacterized protein from Escherichia coli (strain K12).